The following is a 610-amino-acid chain: Phragmoplastin DRP1A (610 aa).

M1 carries the N-acetylmethionine modification. The region spanning 31 to 300 (WDSLPAIAVV…LERVIKSRIP (270 aa)) is the Dynamin-type G domain. The interval 41-48 (GGQSSGKS) is G1 motif. 44-49 (SSGKSS) provides a ligand contact to GTP. Residues 67–69 (VTR) are G2 motif. Positions 142 to 145 (DLPG) are G3 motif. A G4 motif region spans residues 211–214 (TKID). Residues 212–217 (KIDLMD) and 242–245 (NRSQ) contribute to the GTP site. Residues 241 to 244 (VNRS) form a G5 motif region. Residues 518–610 (LRRIGSNVLS…SEIDAVAWSK (93 aa)) form the GED domain.

Belongs to the TRAFAC class dynamin-like GTPase superfamily. Dynamin/Fzo/YdjA family. As to quaternary structure, forms homodimer and may homooligomerize and heterooligomerize to form the phragmoplastin complex. Interacts with AGD3/VAN3. May interact with CALS1. Binds to AHK2. Binds to SH3P2. Forms a complex made of SH3P2 and DRP1A and triggers its accumulation at the cell plate. Interacts with DRP2B at the plasma membrane and in forming clathrin-coated vesicles (CCV). Binds to PHIP1. As to expression, ubiquitous. Expressed in leaves (at protein level).

Its subcellular location is the cytoplasm. The protein resides in the cytoskeleton. It localises to the phragmoplast. It is found in the cell cortex. The protein localises to the cytoplasmic vesicle. Its subcellular location is the clathrin-coated vesicle. The protein resides in the cell membrane. The enzyme catalyses GTP + H2O = GDP + phosphate + H(+). Its function is as follows. Microtubule-associated force-producing protein that is targeted to at the leading edges of the forming cell plate during cytokinesis. Also plays a major role in plasma membrane maintenance and cell wall integrity with implications in vesicular trafficking, polar cell expansion, vascular formation, and other aspects of plant growth and development, including stigmatic papillae expansion. Collaboratively with DRP2B, participates in clathrin-coated vesicle formation during endocytosis. Necessary for BOR1 polar localization in low-boron (B) conditions as well as for BOR1 endocytosis and subsequent degradation under high-concentration of boron. Has a GTPase activity. Required for the sterols-dependent dynamic high lipid order observed at the cell plate of dividing cells. Together with SH3P2, converts the fused vesicles to tubular structures at the cell plate and phragmoplasts during cytokinesis. With DRP2B and PIP5K3, required for the precise coordination of polar ARAC3/ROP6 and ARAC4/ROP2 placement and subsequent root hair positioning during planar polarity formation in root hair-forming cells, probably by mediating the correct basal-to-planar polarity switching of D6PK into the polar, lipid-enriched domain. Involved in endocytosis required for cellulose deposition during cell wall formation and elongation. Interacts with plasma membrane-mimetic liposomes and induces their clustering. The polypeptide is Phragmoplastin DRP1A (Arabidopsis thaliana (Mouse-ear cress)).